The chain runs to 149 residues: D-aminoacyl-tRNA deacylase (149 aa).

Positions Gly139–Pro140 match the Gly-cisPro motif, important for rejection of L-amino acids motif.

This sequence belongs to the DTD family. As to quaternary structure, homodimer.

The protein resides in the cytoplasm. The enzyme catalyses glycyl-tRNA(Ala) + H2O = tRNA(Ala) + glycine + H(+). It carries out the reaction a D-aminoacyl-tRNA + H2O = a tRNA + a D-alpha-amino acid + H(+). In terms of biological role, an aminoacyl-tRNA editing enzyme that deacylates mischarged D-aminoacyl-tRNAs. Also deacylates mischarged glycyl-tRNA(Ala), protecting cells against glycine mischarging by AlaRS. Acts via tRNA-based rather than protein-based catalysis; rejects L-amino acids rather than detecting D-amino acids in the active site. By recycling D-aminoacyl-tRNA to D-amino acids and free tRNA molecules, this enzyme counteracts the toxicity associated with the formation of D-aminoacyl-tRNA entities in vivo and helps enforce protein L-homochirality. In Candida glabrata (strain ATCC 2001 / BCRC 20586 / JCM 3761 / NBRC 0622 / NRRL Y-65 / CBS 138) (Yeast), this protein is D-aminoacyl-tRNA deacylase (DTD1).